Here is a 262-residue protein sequence, read N- to C-terminus: Putative ABC transporter ATP-binding protein SAV_3608 (262 aa).

The region spanning 18–248 (LDVAGLAFAY…DTLMRAHRLE (231 aa)) is the ABC transporter domain. 51–58 (GPNGAGKT) contacts ATP.

The protein belongs to the ABC transporter superfamily.

The protein localises to the cell membrane. Probably part of an ABC transporter complex. Responsible for energy coupling to the transport system. This Streptomyces avermitilis (strain ATCC 31267 / DSM 46492 / JCM 5070 / NBRC 14893 / NCIMB 12804 / NRRL 8165 / MA-4680) protein is Putative ABC transporter ATP-binding protein SAV_3608.